The following is a 61-amino-acid chain: MARYRHSRSRSRSRYRRRRRRRSRYRSQRRRYRRHRRSGRRRRRGRRRGYRRRYHSHRRRY.

The segment at M1 to Y61 is disordered.

The protein belongs to the protamine P1 family. In terms of tissue distribution, testis.

Its subcellular location is the nucleus. It localises to the chromosome. Its function is as follows. Protamines substitute for histones in the chromatin of sperm during the haploid phase of spermatogenesis. They compact sperm DNA into a highly condensed, stable and inactive complex. The chain is Sperm protamine P1 (PRM1) from Notoryctes typhlops (Southern marsupial mole).